We begin with the raw amino-acid sequence, 453 residues long: Venom prothrombin activator notecarin-D2 (453 aa).

The N-terminal stretch at Met1 to Ala20 is a signal peptide. Residues Glu21–Arg40 constitute a propeptide that is removed on maturation. Residues Ser41–Asp86 enclose the Gla domain. A 4-carboxyglutamate mark is found at Glu46, Glu47, Glu54, Glu56, Glu59, Glu60, Glu65, Glu66, Glu69, Glu72, and Glu75. An intrachain disulfide couples Cys57 to Cys62. The 37-residue stretch at Asp86 to Glu122 folds into the EGF-like 1; calcium-binding domain. 11 disulfide bridges follow: Cys90-Cys101, Cys95-Cys110, Cys112-Cys121, Cys129-Cys140, Cys136-Cys149, Cys151-Cys164, Cys172-Cys326, Cys216-Cys221, Cys236-Cys252, Cys374-Cys388, and Cys399-Cys427. O-linked (Hex...) serine glycosylation occurs at Ser92. Residues Cys129 to Cys164 form the EGF-like 2 domain. The propeptide at Arg182–Arg209 is activation peptide. The 242-residue stretch at Ile210 to Ser451 folds into the Peptidase S1 domain. The active-site Charge relay system is His251. N-linked (GlcNAc...) asparagine glycosylation is present at Asn254. Catalysis depends on Asp306, which acts as the Charge relay system. Ser403 functions as the Charge relay system in the catalytic mechanism.

This sequence belongs to the peptidase S1 family. Snake venom subfamily. Heterodimer of a light chain and a heavy chain; disulfide-linked. Post-translationally, gamma-carboxyglutamate residues are formed by vitamin K dependent carboxylation. These residues are essential for the binding of calcium. As to expression, expressed by the venom gland.

It localises to the secreted. It catalyses the reaction Selective cleavage of Arg-|-Thr and then Arg-|-Ile bonds in prothrombin to form thrombin.. Functionally, snake prothrombin activator that attacks the hemostatic system of prey. This protein is functionally similar to blood coagulation factor Xa. This Notechis scutatus scutatus (Mainland tiger snake) protein is Venom prothrombin activator notecarin-D2.